The chain runs to 376 residues: Chaperone protein DnaJ (376 aa).

The J domain maps to 5 to 70; the sequence is DFYEVLGVGR…DKKAAYDQFG (66 aa). Residues 132–210 form a CR-type zinc finger; the sequence is GLTKELRIPT…CHGEGRVEKS (79 aa). C145, C148, C162, C165, C184, C187, C198, and C201 together coordinate Zn(2+). CXXCXGXG motif repeat units follow at residues 145–152, 162–169, 184–191, and 198–205; these read CDACDGSG, CGTCHGQG, CPTCHGRG, and CNKCHGEG.

This sequence belongs to the DnaJ family. Homodimer. It depends on Zn(2+) as a cofactor.

The protein resides in the cytoplasm. Functionally, participates actively in the response to hyperosmotic and heat shock by preventing the aggregation of stress-denatured proteins and by disaggregating proteins, also in an autonomous, DnaK-independent fashion. Unfolded proteins bind initially to DnaJ; upon interaction with the DnaJ-bound protein, DnaK hydrolyzes its bound ATP, resulting in the formation of a stable complex. GrpE releases ADP from DnaK; ATP binding to DnaK triggers the release of the substrate protein, thus completing the reaction cycle. Several rounds of ATP-dependent interactions between DnaJ, DnaK and GrpE are required for fully efficient folding. Also involved, together with DnaK and GrpE, in the DNA replication of plasmids through activation of initiation proteins. This Shewanella halifaxensis (strain HAW-EB4) protein is Chaperone protein DnaJ.